We begin with the raw amino-acid sequence, 361 residues long: Serpentine receptor class epsilon-32 (361 aa).

Transmembrane regions (helical) follow at residues 34–54 (IIEL…LYVM), 66–86 (ILYI…LITI), 124–144 (LLIF…YGIL), 168–188 (IPIA…LSVL), 195–215 (FLSH…YLFI), 256–276 (LVFV…ALAF), and 286–306 (FVEN…MLTI).

The protein belongs to the nematode receptor-like protein sre family.

The protein resides in the membrane. The sequence is that of Serpentine receptor class epsilon-32 (sre-32) from Caenorhabditis elegans.